The following is a 470-amino-acid chain: Poly(A) polymerase catalytic subunit (470 aa).

Active-site residues include Asp192 and Asp194.

This sequence belongs to the poxviridae poly(A) polymerase catalytic subunit family. As to quaternary structure, heterodimer of a large (catalytic) subunit and a small (regulatory) subunit.

It carries out the reaction RNA(n) + ATP = RNA(n)-3'-adenine ribonucleotide + diphosphate. Its function is as follows. Polymerase that creates the 3'-poly(A) tail of mRNA's. This chain is Poly(A) polymerase catalytic subunit (PAPL), found in Erythrocebus patas (Red guenon).